Reading from the N-terminus, the 451-residue chain is Opioid growth factor receptor-like protein 1 (451 aa).

2 disordered regions span residues 1-89 (MGNL…TAKP) and 308-451 (ENFI…VLVQ). Residues 43-66 (PGQESEQPAQPPEQAGGRPGASPA) show a composition bias toward low complexity. Residues 322–341 (GSKAQKMSSPLASSHNSQTS) are compositionally biased toward polar residues. 2 stretches are compositionally biased toward basic and acidic residues: residues 362–381 (TAED…DRPS) and 389–399 (AKPRNTEKDSN). Low complexity predominate over residues 431–443 (NDNQDNENPGNTN).

This sequence belongs to the opioid growth factor receptor family. As to expression, ubiquitous.

The polypeptide is Opioid growth factor receptor-like protein 1 (OGFRL1) (Homo sapiens (Human)).